The primary structure comprises 89 residues: Small ribosomal subunit protein uS15 (89 aa).

Belongs to the universal ribosomal protein uS15 family. As to quaternary structure, part of the 30S ribosomal subunit. Forms a bridge to the 50S subunit in the 70S ribosome, contacting the 23S rRNA.

Functionally, one of the primary rRNA binding proteins, it binds directly to 16S rRNA where it helps nucleate assembly of the platform of the 30S subunit by binding and bridging several RNA helices of the 16S rRNA. Forms an intersubunit bridge (bridge B4) with the 23S rRNA of the 50S subunit in the ribosome. This Edwardsiella ictaluri (strain 93-146) protein is Small ribosomal subunit protein uS15.